The primary structure comprises 273 residues: Protein FAM210A (273 aa).

The interval 94-116 (RVLSSSSTSQETPSEKKEETDPL) is disordered. The span at 106–116 (PSEKKEETDPL) shows a compositional bias: basic and acidic residues. A DUF1279 domain is found at 118–230 (DKSISLYQRF…GYMSTPPPVK (113 aa)). A helical transmembrane segment spans residues 138 to 158 (LIPVHLITSGIWFGTFYYATI). Residues 233–269 (LQGRMEETKELITEKMEETKDRLTEKLQETKGKVSFK) adopt a coiled-coil conformation.

The protein belongs to the FAM210 family. Interacts with ATAD3A. In terms of tissue distribution, expressed in skeletal muscle, heart, brain but not in bone.

The protein localises to the membrane. The protein resides in the mitochondrion. It is found in the cytoplasm. Functionally, may play a role in the structure and strength of both muscle and bone. The protein is Protein FAM210A (Fam210a) of Mus musculus (Mouse).